A 206-amino-acid chain; its full sequence is Transmembrane emp24 domain-containing protein bai (206 aa).

The N-terminal stretch at 1-17 (MAKATFFYFLFIGYVWP) is a signal peptide. Topologically, residues 18–172 (IDSVMFNLAP…RDTNEKTNSR (155 aa)) are lumenal. The GOLD domain occupies 30 to 140 (QKCLKEDIQA…LKPLEVDLKR (111 aa)). Residues 173 to 193 (VLFFSIFSMCCLLGLATWQVL) form a helical membrane-spanning segment. The Cytoplasmic portion of the chain corresponds to 194-206 (YLRRYFKAKKLIE).

It belongs to the EMP24/GP25L family.

It is found in the membrane. Functionally, eca and bai are essential, though not redundant, for dorsoventral patterning of the embryo. Specifically required during early embryogenesis for the activity of maternal tkv, while the zygotic tkv is not affected. In Drosophila persimilis (Fruit fly), this protein is Transmembrane emp24 domain-containing protein bai.